Reading from the N-terminus, the 620-residue chain is MTVRNGGFPGDYNRNSFDSPGGCDDSPNASKDDETFGVPRIVLPLSDLSSSERRKWIHTLRQELEQLRSFQKSVGDLLPISKIVTSTPASNVSRPKSFGMSRCSTGPGKRVLPFTATKPEPVTTSTMLRMKQCESLLKRLMSQQHCWLFNTPVDVVKLNIPDYFTIIKHPMDLGTVKSKLTSGTYSSPSEFSADVRLTFRNAMTYNPSDNNVYRFADTLSKFFEVRWKTIEKKSSGTKSEPSNLATLAHKDIAIPEPVAKKRKMNAVKRNSLLEPAKRVMTDEDRVKLGRDLGSLTEFPVQIINFLRDHSSKEERSGDDEIEIDINDLSHDALFQLRDLFDEFLRENQKKDSNGEPCVLELLHGSGPGNSLTQHCDGSELEDEDVDIGNYEHPISHISTVRTEKDSVGGLNQMEDASRGKLSLIEGADGHQDGNSAPKEKELPPEKRYRAALLKNRFADIILKAQEITLNQNEKRDPETLQREKEELELQKKKEKARLQAEAKEAEEARRKAEAQEAKRKLELEREAARQALLEMEKSVEINENTRFLKDLELLKTVNTDQLRNLRDVGSESDGLAVFGFGGSNPLEQLGLFMKHEEDEDESDMLAFPDPGNEVEEGEID.

Residues 1–35 (MTVRNGGFPGDYNRNSFDSPGGCDDSPNASKDDET) are disordered. In terms of domain architecture, Bromo spans 124–230 (TSTMLRMKQC…KFFEVRWKTI (107 aa)). In terms of domain architecture, NET spans 270–351 (NSLLEPAKRV…EFLRENQKKD (82 aa)). Phosphoserine is present on S417. The transcription activation domain stretch occupies residues 445 to 620 (EKRYRAALLK…GNEVEEGEID (176 aa)). A coiled-coil region spans residues 470–544 (NQNEKRDPET…MEKSVEINEN (75 aa)). Disordered stretches follow at residues 491-511 (KKKEKARLQAEAKEAEEARRK) and 597-620 (EDEDESDMLAFPDPGNEVEEGEID).

As to quaternary structure, interacts with BT1, BT2 and BT4.

It is found in the nucleus. In Arabidopsis thaliana (Mouse-ear cress), this protein is Transcription factor GTE11 (GTE11).